The primary structure comprises 115 residues: Small ribosomal subunit protein bS18c (115 aa).

Positions 91–115 are disordered; that stretch reads TNALKARTQNKDQKKEKFQINKKKK. The span at 99 to 109 shows a compositional bias: basic and acidic residues; sequence QNKDQKKEKFQ.

Belongs to the bacterial ribosomal protein bS18 family. In terms of assembly, part of the 30S ribosomal subunit.

It localises to the plastid. It is found in the chloroplast. In Ipomoea purpurea (Common morning glory), this protein is Small ribosomal subunit protein bS18c.